The chain runs to 182 residues: Putative manganese efflux pump MntP (182 aa).

A run of 6 helical transmembrane segments spans residues 6-26 (LIPL…VSLG), 37-57 (ILYI…IGMV), 71-91 (HFAG…STIL), 101-121 (IGIS…SVGL), 131-151 (IITI…GLLI), and 162-182 (YGEI…LFPI).

The protein belongs to the MntP (TC 9.B.29) family.

The protein localises to the cell membrane. Its function is as follows. Probably functions as a manganese efflux pump. The polypeptide is Putative manganese efflux pump MntP (Bacillus cereus (strain G9842)).